The chain runs to 313 residues: MGQTNVTSWRDFVFLGFSSSGELQLLLFALFLSLYLVTLTSNVFIIIAIRLDSHLHTPMYLFLSFLSFSETCYTLGIIPRMLSGLAGGDQAISYVGCAAQMFFSASWACTNCFLLAAMGFDRYVAICAPLHYASHMNPTLCAQLVITSFLTGYLFGLGMTLVIFHLSFCSSHEIQHFFCDTPPVLSLACGDTGPSELRIFILSLLVLLVSFFFITISYAYILAAILRIPSAEGQKKAFSTCASHLTVVIIHYGCASFVYLRPKASYSLERDQLIAMTYTVVTPLLNPIVYSLRNRAIQTALRNAFRGRLLGKG.

Residues 1-25 (MGQTNVTSWRDFVFLGFSSSGELQL) lie on the Extracellular side of the membrane. An N-linked (GlcNAc...) asparagine glycan is attached at asparagine 5. Residues 26–46 (LLFALFLSLYLVTLTSNVFII) form a helical membrane-spanning segment. The Cytoplasmic portion of the chain corresponds to 47-54 (IAIRLDSH). A helical membrane pass occupies residues 55-75 (LHTPMYLFLSFLSFSETCYTL). At 76–99 (GIIPRMLSGLAGGDQAISYVGCAA) the chain is on the extracellular side. A disulfide bond links cysteine 97 and cysteine 189. A helical transmembrane segment spans residues 100-120 (QMFFSASWACTNCFLLAAMGF). Topologically, residues 121-139 (DRYVAICAPLHYASHMNPT) are cytoplasmic. A helical transmembrane segment spans residues 140–160 (LCAQLVITSFLTGYLFGLGMT). At 161 to 197 (LVIFHLSFCSSHEIQHFFCDTPPVLSLACGDTGPSEL) the chain is on the extracellular side. Residues 198-217 (RIFILSLLVLLVSFFFITIS) traverse the membrane as a helical segment. The Cytoplasmic portion of the chain corresponds to 218 to 237 (YAYILAAILRIPSAEGQKKA). The chain crosses the membrane as a helical span at residues 238-258 (FSTCASHLTVVIIHYGCASFV). Residues 259-271 (YLRPKASYSLERD) lie on the Extracellular side of the membrane. A helical transmembrane segment spans residues 272 to 292 (QLIAMTYTVVTPLLNPIVYSL). The Cytoplasmic segment spans residues 293 to 313 (RNRAIQTALRNAFRGRLLGKG).

Belongs to the G-protein coupled receptor 1 family.

It localises to the cell membrane. Odorant receptor. In Homo sapiens (Human), this protein is Olfactory receptor 10Z1 (OR10Z1).